An 853-amino-acid polypeptide reads, in one-letter code: EF-hand domain-containing family member B (853 aa).

2 disordered regions span residues 1–31 (MCSFVRVGSPKPLQTSASPLEMSSLRRTRAP) and 244–266 (AQQPEEKKEPGSTEPGVEPPGNI). EF-hand domains are found at residues 581-616 (QNFDTLQVAFRHYDKKGDGVIDRAELHEACVQANLH) and 617-652 (LDKMLLDHLFDYCDVDQDGLINYLEFANFLNWKDRI). Ca(2+)-binding residues include aspartate 594, aspartate 598, glutamate 605, aspartate 630, aspartate 632, aspartate 634, and glutamate 641.

In terms of assembly, microtubule inner protein component of sperm flagellar doublet microtubules. Interacts with STIM1 and ORAI1; the interactions take place upon Ca(2+)-store depletion and dissociate through a Ca(2+)-dependent mechanism. Interaction with STIM1 inhibits STIM1 interaction with SARAF.

The protein localises to the cytoplasm. Its subcellular location is the cytoskeleton. It localises to the cilium axoneme. The protein resides in the flagellum axoneme. Microtubule inner protein (MIP) part of the dynein-decorated doublet microtubules (DMTs) in cilia axoneme, which is required for motile cilia beating. Cytosolic sensor for calcium, modulates the interaction of STIM1 and ORAI1 upon store depletion and the activation of store-operated Ca(2+) entry (SOCE) and NFAT translocation from cytosol to nucleus. The protein is EF-hand domain-containing family member B of Mus musculus (Mouse).